Reading from the N-terminus, the 236-residue chain is SERTA domain-containing protein 1 (236 aa).

The tract at residues M1–A20 is disordered. In terms of domain architecture, SERTA spans P38 to A85. A disordered region spans residues P189–D211. Positions G197–A207 are enriched in basic and acidic residues.

Interacts with the PHD-bromodomain of TIF1, TRIM28/TIF1B and p300/CBP. Interacts with E2F1 and TFDP1; modulates transactivation activity of TFDP1/E2F complexes. Also interacts with CDK4. Polyubiquitinated, which promotes proteasomal degradation.

Its function is as follows. Acts at E2F-responsive promoters as coregulator to integrate signals provided by PHD- and/or bromodomain-containing transcription factors. Stimulates E2F1/TFDP1 transcriptional activity. Renders the activity of cyclin D1/CDK4 resistant to the inhibitory effects of CDKN2A/p16INK4A. In Homo sapiens (Human), this protein is SERTA domain-containing protein 1 (SERTAD1).